An 81-amino-acid chain; its full sequence is MYIHLGDDFVVSTRDIVGIFDFKANMSPIVEEFLKKQKHKVVPSVNGTPKSIVVTVQNIYYSPLSSSTLKKRAQFMFEIDS.

Regulates the biosynthesis of the extracellular matrix and the biofilm formation. May act as an enhancer of biofilm gene expression. Acts in parallel to the pathway that governs SinR derepression. The sequence is that of Extracellular matrix regulatory protein B from Bacillus subtilis (strain 168).